The chain runs to 2067 residues: Separin (2067 aa).

4 disordered regions span residues 51-91, 140-167, 1316-1363, and 1449-1478; these read RTAR…AQDV, KKDA…TDNE, DLEE…SVEA, and LEPK…TKAQ. Residues 55–86 are compositionally biased toward low complexity; that stretch reads GTKATATNATASSRAKTTRTKSTSTSTTRTKT. Low complexity-rich tracts occupy residues 1333-1354 and 1449-1461; these read TRQP…ARST and LEPK…SSKS. The Peptidase C50 domain occupies 1880-1975; it reads RRNGTYILNP…SGTLTEAGEY (96 aa). Residue C1964 is part of the active site.

It is found in the nucleus. It carries out the reaction All bonds known to be hydrolyzed by this endopeptidase have arginine in P1 and an acidic residue in P4. P6 is often occupied by an acidic residue or by a hydroxy-amino-acid residue, the phosphorylation of which enhances cleavage.. Its function is as follows. Required for nuclear division. Could function in the mitotic spindle. This chain is Separin (bimB), found in Emericella nidulans (strain FGSC A4 / ATCC 38163 / CBS 112.46 / NRRL 194 / M139) (Aspergillus nidulans).